Here is a 455-residue protein sequence, read N- to C-terminus: Pup--protein ligase (455 aa).

Glu-10 lines the Mg(2+) pocket. Arg-55 is a binding site for ATP. Mg(2+) is bound at residue Tyr-57. Catalysis depends on Asp-59, which acts as the Proton acceptor. Position 65 (Glu-65) interacts with Mg(2+). ATP is bound by residues Thr-68 and Trp-422.

It belongs to the Pup ligase/Pup deamidase family. Pup-conjugating enzyme subfamily.

It catalyses the reaction ATP + [prokaryotic ubiquitin-like protein]-L-glutamate + [protein]-L-lysine = ADP + phosphate + N(6)-([prokaryotic ubiquitin-like protein]-gamma-L-glutamyl)-[protein]-L-lysine.. It functions in the pathway protein degradation; proteasomal Pup-dependent pathway. Its pathway is protein modification; protein pupylation. Its function is as follows. Catalyzes the covalent attachment of the prokaryotic ubiquitin-like protein modifier Pup to the proteasomal substrate proteins, thereby targeting them for proteasomal degradation. This tagging system is termed pupylation. The ligation reaction involves the side-chain carboxylate of the C-terminal glutamate of Pup and the side-chain amino group of a substrate lysine. This chain is Pup--protein ligase, found in Sanguibacter keddieii (strain ATCC 51767 / DSM 10542 / NCFB 3025 / ST-74).